The chain runs to 717 residues: Asp/Glu-specific dipeptidyl-peptidase (717 aa).

A signal peptide spans 1–21 (MNKRFFPTLLLAFVCSTLAYA). Active-site charge relay system residues include His85, Asp226, and Ser652.

The protein belongs to the peptidase S46 family.

It is found in the secreted. Its subcellular location is the cell surface. Its activity is regulated as follows. Enzyme activity is completely blocked by diisopropyl-fluorophosphates, moderately by phenylmethylsulfonyl fluoride (PMSF) and 4-(2-methyl)benzenesulfonyl fluoride, and slightly by pepstatin in vitro. In terms of biological role, catalyzes the removal of dipeptides from the N-terminus of oligopeptides. Shows a strict specificity for acidic residues (Asp or Glu) in the P1 position, and has a hydrophobic residue preference at the P2 position. Is likely involved in amino acid metabolism and bacterial growth/survival of asaccharolytic P.endodontalis, that utilizes amino acids from extracellular proteinaceous nutrients as energy and carbon sources. In Porphyromonas endodontalis (strain ATCC 35406 / DSM 24491 / JCM 8526 / CCUG 16442 / BCRC 14492 / NCTC 13058 / HG 370) (Bacteroides endodontalis), this protein is Asp/Glu-specific dipeptidyl-peptidase (dpp11).